The chain runs to 101 residues: uncharacterized protein (101 aa).

Positions 1-18 (MSINALLYVLSLALLIWT) are cleaved as a signal peptide. Residues 62-82 (FQFDSIPSSSLSLSPFPFLFF) traverse the membrane as a helical segment.

The protein localises to the membrane. This is an uncharacterized protein from Saccharomyces cerevisiae (strain ATCC 204508 / S288c) (Baker's yeast).